The chain runs to 133 residues: Small ribosomal subunit protein uS8 (133 aa).

The protein belongs to the universal ribosomal protein uS8 family. As to quaternary structure, part of the 30S ribosomal subunit. Contacts proteins S5 and S12.

In terms of biological role, one of the primary rRNA binding proteins, it binds directly to 16S rRNA central domain where it helps coordinate assembly of the platform of the 30S subunit. The sequence is that of Small ribosomal subunit protein uS8 from Crocosphaera subtropica (strain ATCC 51142 / BH68) (Cyanothece sp. (strain ATCC 51142)).